The chain runs to 167 residues: Leptin (167 aa).

The signal sequence occupies residues 1–21 (MRCGPLYRFLWLWPYLSYVEA). C117 and C167 are joined by a disulfide.

It belongs to the leptin family.

Its subcellular location is the secreted. Its function is as follows. Key player in the regulation of energy balance and body weight control. Once released into the circulation, has central and peripheral effects by binding LEPR, found in many tissues, which results in the activation of several major signaling pathways. In the hypothalamus, acts as an appetite-regulating factor that induces a decrease in food intake and an increase in energy consumption by inducing anorexinogenic factors and suppressing orexigenic neuropeptides, also regulates bone mass and secretion of hypothalamo-pituitary-adrenal hormones. In the periphery, increases basal metabolism, influences reproductive function, regulates pancreatic beta-cell function and insulin secretion, is pro-angiogenic for endothelial cell and affects innate and adaptive immunity. In the arcuate nucleus of the hypothalamus, activates by depolarization POMC neurons inducing FOS and SOCS3 expression to release anorexigenic peptides and inhibits by hyperpolarization NPY neurons inducing SOCS3 with a consequent reduction on release of orexigenic peptides. In addition to its known satiety inducing effect, has a modulatory role in nutrient absorption. In the intestine, reduces glucose absorption by enterocytes by activating PKC and leading to a sequential activation of p38, PI3K and ERK signaling pathways which exerts an inhibitory effect on glucose absorption. Acts as a growth factor on certain tissues, through the activation of different signaling pathways increases expression of genes involved in cell cycle regulation such as CCND1, via JAK2-STAT3 pathway, or VEGFA, via MAPK1/3 and PI3K-AKT1 pathways. May also play an apoptotic role via JAK2-STAT3 pathway and up-regulation of BIRC5 expression. Pro-angiogenic, has mitogenic activity on vascular endothelial cells and plays a role in matrix remodeling by regulating the expression of matrix metalloproteinases (MMPs) and tissue inhibitors of metalloproteinases (TIMPs). In innate immunity, modulates the activity and function of neutrophils by increasing chemotaxis and the secretion of oxygen radicals. Increases phagocytosis by macrophages and enhances secretion of pro-inflammatory mediators. Increases cytotoxic ability of NK cells. Plays a pro-inflammatory role, in synergy with IL1B, by inducing NOS2 which promotes the production of IL6, IL8 and Prostaglandin E2, through a signaling pathway that involves JAK2, PI3K, MAP2K1/MEK1 and MAPK14/p38. In adaptive immunity, promotes the switch of memory T-cells towards T helper-1 cell immune responses. Increases CD4(+)CD25(-) T-cell proliferation and reduces autophagy during TCR (T-cell receptor) stimulation, through MTOR signaling pathway activation and BCL2 up-regulation. This chain is Leptin (LEP), found in Capra hircus (Goat).